The primary structure comprises 87 residues: MPRICPILDKRPTRGRKIIRKGKAKKKGGIGLHTTGNTPRLFLPNLRNKKVYVPELAKKVSLRISARALKTLMKKGTYTILKEKGLI.

Belongs to the bacterial ribosomal protein bL28 family.

This chain is Large ribosomal subunit protein bL28, found in Methylacidiphilum infernorum (isolate V4) (Methylokorus infernorum (strain V4)).